The primary structure comprises 565 residues: Probable peptidoglycan D,D-transpeptidase PbpC (565 aa).

The helical transmembrane segment at 10-30 (FILVVTLFVLASLAVSGRLVY) threads the bilayer. Serine 289 (acyl-ester intermediate) is an active-site residue.

It belongs to the transpeptidase family. FtsI subfamily.

The protein localises to the cell inner membrane. The enzyme catalyses Preferential cleavage: (Ac)2-L-Lys-D-Ala-|-D-Ala. Also transpeptidation of peptidyl-alanyl moieties that are N-acyl substituents of D-alanine.. Its pathway is cell wall biogenesis; peptidoglycan biosynthesis. Catalyzes cross-linking of the peptidoglycan cell wall at the division septum. Binds penicillin. The chain is Probable peptidoglycan D,D-transpeptidase PbpC from Pseudomonas aeruginosa (strain ATCC 15692 / DSM 22644 / CIP 104116 / JCM 14847 / LMG 12228 / 1C / PRS 101 / PAO1).